Consider the following 591-residue polypeptide: CTP synthase 1 (591 aa).

Residues 300–554 enclose the Glutamine amidotransferase type-1 domain; it reads SIALVGKYTK…LAAAGRLQSY (255 aa). Active-site for GATase activity residues include C399, H526, and E528. Phosphoserine occurs at positions 571 and 575.

The protein belongs to the CTP synthase family.

It carries out the reaction UTP + L-glutamine + ATP + H2O = CTP + L-glutamate + ADP + phosphate + 2 H(+). Its pathway is pyrimidine metabolism; CTP biosynthesis via de novo pathway; CTP from UDP: step 2/2. Its function is as follows. This enzyme is involved in the de novo synthesis of CTP, a precursor of DNA, RNA and phospholipids. Catalyzes the ATP-dependent amination of UTP to CTP with either L-glutamine or ammonia as a source of nitrogen. This chain is CTP synthase 1 (ctps1), found in Danio rerio (Zebrafish).